The sequence spans 257 residues: Hydroxyacylglutathione hydrolase (257 aa).

Zn(2+) contacts are provided by histidine 54, histidine 56, aspartate 58, histidine 59, histidine 113, aspartate 137, and histidine 175.

Belongs to the metallo-beta-lactamase superfamily. Glyoxalase II family. In terms of assembly, monomer. Requires Zn(2+) as cofactor.

It carries out the reaction an S-(2-hydroxyacyl)glutathione + H2O = a 2-hydroxy carboxylate + glutathione + H(+). Its pathway is secondary metabolite metabolism; methylglyoxal degradation; (R)-lactate from methylglyoxal: step 2/2. Thiolesterase that catalyzes the hydrolysis of S-D-lactoyl-glutathione to form glutathione and D-lactic acid. This chain is Hydroxyacylglutathione hydrolase, found in Trichodesmium erythraeum (strain IMS101).